Reading from the N-terminus, the 1080-residue chain is MPKRTDLRTILIIGAGPIVIGQACEFDYSGAQACKALRAEGFRVVLVNSNPATIMTDPDMADAVYIEPIHWRTVEKIITKEKPDALLPTMGGQTALNCALDLADHGVLEKYGVELIGAKREAIRMAEDRELFRVAMQEIGLECPKAEVAKSLERALEIQAKVGFPTIIRPSFTLGGTGGGIAYNRQEFEEIIKRGLELSPVHEVLVEESVLGWKEFEMEVVRDASDNCIIVCSIENLDPMGVHTGDSITVAPAQTLSDKEYQRLRDASIAVLRKIGVDTGGSNVQFGIDPQTGRVVVIEMNPRVSRSSALASKATGFPIAKIAAKLAVGYTLDELKNEITGGKTPASFEPSIDYVVTKIPRFAFEKFPQADARLTTQMKSVGEVMAMGRTFAESLQKAVRGLETGKVGLEPTGLDLSSEDDLVVLKRELKAPGAERLFYVADAFRAGFAVADVYALSYIDPWFLDQIEEIVAAEGRLVTDGLGSIDGARLRQLKRIGFSDARIAQLTGTNEVAVRTLRRVLKVKPVYKRVDSCAGEFATGTAYLYSTYEEECEAAPSDRRKIMILGGGPNRIGQGIEFDYCCVHAALALREDGFETIMVNCNPETVSTDYDTSDRLYFEPLTLEDVLEIVEVEHPVGVIVQYGGQTPLKLAKALEANGVPVIGTSPESIDLAEDRERFQRLVQQLGLRQPPNCTARTADEALVLAREIGYPLVVRPSYVLGGRAMEIVYSEADLARYVRDAVKVSNDSPVLLDRFLDNAVEVDVDIIADPEGQVLIGGVMEHIEEAGVHSGDSSCSLPPYSLSAATQDDLRRQVIRLAQALNVIGLMNTQFAIQSNDDGSDIVYLLEVNPRASRTVPFVSKATGVPLAKIAARCMTGKTLAEQSVTCEVVPAYYAVKEAIFPFAKLQGVDPILGPEMRSTGEVMGVGRSFAAAFARAQEAGDIRAPQPGRAFVSVRDPDKKRVLPVVLALVERGFGVVATAGTYAWLQQNGVACEVVNKVAEGRPHIVDLIKNGEIVYIINTTEGRAAIADSFSIRREALQHCVTYSTTIAGAKALVNSLEFRGTGPVWSLQELHKELQV.

The carboxyphosphate synthetic domain stretch occupies residues 1–403; it reads MPKRTDLRTI…SLQKAVRGLE (403 aa). Positions 129, 169, 175, 176, 208, 210, 215, 241, 242, 243, 285, and 299 each coordinate ATP. The ATP-grasp 1 domain maps to 133–328; that stretch reads RVAMQEIGLE…IAKIAAKLAV (196 aa). Mg(2+) is bound by residues Q285, E299, and N301. Residues Q285, E299, and N301 each contribute to the Mn(2+) site. The tract at residues 404–554 is oligomerization domain; the sequence is TGKVGLEPTG…YSTYEEECEA (151 aa). The tract at residues 555 to 942 is carbamoyl phosphate synthetic domain; that stretch reads APSDRRKIMI…AFARAQEAGD (388 aa). Positions 679–876 constitute an ATP-grasp 2 domain; the sequence is QRLVQQLGLR…LAKIAARCMT (198 aa). 10 residues coordinate ATP: R715, R754, L756, E761, G787, V788, H789, S790, Q830, and E847. Residues Q830, E847, and N849 each contribute to the Mg(2+) site. The Mn(2+) site is built by Q830, E847, and N849. The 138-residue stretch at 943 to 1080 folds into the MGS-like domain; the sequence is IRAPQPGRAF…LQELHKELQV (138 aa). An allosteric domain region spans residues 943–1080; that stretch reads IRAPQPGRAF…LQELHKELQV (138 aa).

Belongs to the CarB family. As to quaternary structure, composed of two chains; the small (or glutamine) chain promotes the hydrolysis of glutamine to ammonia, which is used by the large (or ammonia) chain to synthesize carbamoyl phosphate. Tetramer of heterodimers (alpha,beta)4. Requires Mg(2+) as cofactor. The cofactor is Mn(2+).

It carries out the reaction hydrogencarbonate + L-glutamine + 2 ATP + H2O = carbamoyl phosphate + L-glutamate + 2 ADP + phosphate + 2 H(+). It catalyses the reaction hydrogencarbonate + NH4(+) + 2 ATP = carbamoyl phosphate + 2 ADP + phosphate + 2 H(+). It participates in amino-acid biosynthesis; L-arginine biosynthesis; carbamoyl phosphate from bicarbonate: step 1/1. The protein operates within pyrimidine metabolism; UMP biosynthesis via de novo pathway; (S)-dihydroorotate from bicarbonate: step 1/3. Functionally, large subunit of the glutamine-dependent carbamoyl phosphate synthetase (CPSase). CPSase catalyzes the formation of carbamoyl phosphate from the ammonia moiety of glutamine, carbonate, and phosphate donated by ATP, constituting the first step of 2 biosynthetic pathways, one leading to arginine and/or urea and the other to pyrimidine nucleotides. The large subunit (synthetase) binds the substrates ammonia (free or transferred from glutamine from the small subunit), hydrogencarbonate and ATP and carries out an ATP-coupled ligase reaction, activating hydrogencarbonate by forming carboxy phosphate which reacts with ammonia to form carbamoyl phosphate. This chain is Carbamoyl phosphate synthase large chain, found in Xylella fastidiosa (strain Temecula1 / ATCC 700964).